The primary structure comprises 410 residues: LL-diaminopimelate aminotransferase (410 aa).

Y15 and G42 together coordinate substrate. Residues Y72, 108-109 (AK), Y132, N188, Y219, and 247-249 (SFS) each bind pyridoxal 5'-phosphate. Residues K109, Y132, and N188 each coordinate substrate. K250 carries the post-translational modification N6-(pyridoxal phosphate)lysine. Pyridoxal 5'-phosphate is bound by residues R258 and N293. The substrate site is built by N293 and R389.

The protein belongs to the class-I pyridoxal-phosphate-dependent aminotransferase family. LL-diaminopimelate aminotransferase subfamily. As to quaternary structure, homodimer. Pyridoxal 5'-phosphate is required as a cofactor.

It catalyses the reaction (2S,6S)-2,6-diaminopimelate + 2-oxoglutarate = (S)-2,3,4,5-tetrahydrodipicolinate + L-glutamate + H2O + H(+). It functions in the pathway amino-acid biosynthesis; L-lysine biosynthesis via DAP pathway; LL-2,6-diaminopimelate from (S)-tetrahydrodipicolinate (aminotransferase route): step 1/1. Its function is as follows. Involved in the synthesis of meso-diaminopimelate (m-DAP or DL-DAP), required for both lysine and peptidoglycan biosynthesis. Catalyzes the direct conversion of tetrahydrodipicolinate to LL-diaminopimelate. This chain is LL-diaminopimelate aminotransferase, found in Bacteroides thetaiotaomicron (strain ATCC 29148 / DSM 2079 / JCM 5827 / CCUG 10774 / NCTC 10582 / VPI-5482 / E50).